The following is a 211-amino-acid chain: Ribosomal RNA small subunit methyltransferase G (211 aa).

Residues Gly-73, Ile-126 to Glu-127, and Arg-142 contribute to the S-adenosyl-L-methionine site.

The protein belongs to the methyltransferase superfamily. RNA methyltransferase RsmG family.

Its subcellular location is the cytoplasm. It carries out the reaction guanosine(527) in 16S rRNA + S-adenosyl-L-methionine = N(7)-methylguanosine(527) in 16S rRNA + S-adenosyl-L-homocysteine. Functionally, specifically methylates the N7 position of guanine in position 527 of 16S rRNA. This Methylorubrum populi (strain ATCC BAA-705 / NCIMB 13946 / BJ001) (Methylobacterium populi) protein is Ribosomal RNA small subunit methyltransferase G.